The following is a 370-amino-acid chain: Holliday junction branch migration complex subunit RuvB (370 aa).

The interval Met-1–Tyr-182 is large ATPase domain (RuvB-L). ATP contacts are provided by residues Leu-21, Arg-22, Gly-63, Lys-66, Thr-67, Thr-68, Glu-129–Phe-131, Arg-172, Tyr-182, and Arg-219. Thr-67 contributes to the Mg(2+) binding site. Residues Arg-183–Glu-253 form a small ATPAse domain (RuvB-S) region. Positions Pro-256–Glu-370 are head domain (RuvB-H). Residues Arg-311 and Arg-316 each coordinate DNA.

The protein belongs to the RuvB family. As to quaternary structure, homohexamer. Forms an RuvA(8)-RuvB(12)-Holliday junction (HJ) complex. HJ DNA is sandwiched between 2 RuvA tetramers; dsDNA enters through RuvA and exits via RuvB. An RuvB hexamer assembles on each DNA strand where it exits the tetramer. Each RuvB hexamer is contacted by two RuvA subunits (via domain III) on 2 adjacent RuvB subunits; this complex drives branch migration. In the full resolvosome a probable DNA-RuvA(4)-RuvB(12)-RuvC(2) complex forms which resolves the HJ.

The protein localises to the cytoplasm. The catalysed reaction is ATP + H2O = ADP + phosphate + H(+). The RuvA-RuvB-RuvC complex processes Holliday junction (HJ) DNA during genetic recombination and DNA repair, while the RuvA-RuvB complex plays an important role in the rescue of blocked DNA replication forks via replication fork reversal (RFR). RuvA specifically binds to HJ cruciform DNA, conferring on it an open structure. The RuvB hexamer acts as an ATP-dependent pump, pulling dsDNA into and through the RuvAB complex. RuvB forms 2 homohexamers on either side of HJ DNA bound by 1 or 2 RuvA tetramers; 4 subunits per hexamer contact DNA at a time. Coordinated motions by a converter formed by DNA-disengaged RuvB subunits stimulates ATP hydrolysis and nucleotide exchange. Immobilization of the converter enables RuvB to convert the ATP-contained energy into a lever motion, pulling 2 nucleotides of DNA out of the RuvA tetramer per ATP hydrolyzed, thus driving DNA branch migration. The RuvB motors rotate together with the DNA substrate, which together with the progressing nucleotide cycle form the mechanistic basis for DNA recombination by continuous HJ branch migration. Branch migration allows RuvC to scan DNA until it finds its consensus sequence, where it cleaves and resolves cruciform DNA. The sequence is that of Holliday junction branch migration complex subunit RuvB from Heliobacterium modesticaldum (strain ATCC 51547 / Ice1).